We begin with the raw amino-acid sequence, 501 residues long: Glutamyl-tRNA(Gln) amidotransferase subunit A (501 aa).

Active-site charge relay system residues include K80 and S155. S179 functions as the Acyl-ester intermediate in the catalytic mechanism.

The protein belongs to the amidase family. GatA subfamily. Heterotrimer of A, B and C subunits.

It catalyses the reaction L-glutamyl-tRNA(Gln) + L-glutamine + ATP + H2O = L-glutaminyl-tRNA(Gln) + L-glutamate + ADP + phosphate + H(+). Its function is as follows. Allows the formation of correctly charged Gln-tRNA(Gln) through the transamidation of misacylated Glu-tRNA(Gln) in organisms which lack glutaminyl-tRNA synthetase. The reaction takes place in the presence of glutamine and ATP through an activated gamma-phospho-Glu-tRNA(Gln). The chain is Glutamyl-tRNA(Gln) amidotransferase subunit A from Cupriavidus taiwanensis (strain DSM 17343 / BCRC 17206 / CCUG 44338 / CIP 107171 / LMG 19424 / R1) (Ralstonia taiwanensis (strain LMG 19424)).